A 177-amino-acid chain; its full sequence is MSRVAKAPVVIPAGVDVKIDGQVITIKGKNGELTRTLNNAVEVKHADNALTFGPRDGFVDGWAQAGTARALLNSMVVGVTEGFTKKLQLVGVGYRAAIKGNAVGLSLGFSHPVEHPLPAGITAECPTQTEIVLKGADKQLIGQVAADLRAYRRPEPYKGKGVRYADEVVRTKEAKKK.

It belongs to the universal ribosomal protein uL6 family. As to quaternary structure, part of the 50S ribosomal subunit.

Functionally, this protein binds to the 23S rRNA, and is important in its secondary structure. It is located near the subunit interface in the base of the L7/L12 stalk, and near the tRNA binding site of the peptidyltransferase center. This is Large ribosomal subunit protein uL6 from Enterobacter sp. (strain 638).